Here is a 222-residue protein sequence, read N- to C-terminus: Small ribosomal subunit protein eS1 (222 aa).

The protein belongs to the eukaryotic ribosomal protein eS1 family.

This is Small ribosomal subunit protein eS1 from Methanocaldococcus jannaschii (strain ATCC 43067 / DSM 2661 / JAL-1 / JCM 10045 / NBRC 100440) (Methanococcus jannaschii).